The sequence spans 132 residues: Small ribosomal subunit protein uS11 (132 aa).

Belongs to the universal ribosomal protein uS11 family. Part of the 30S ribosomal subunit. Interacts with proteins S7 and S18. Binds to IF-3.

In terms of biological role, located on the platform of the 30S subunit, it bridges several disparate RNA helices of the 16S rRNA. Forms part of the Shine-Dalgarno cleft in the 70S ribosome. The sequence is that of Small ribosomal subunit protein uS11 from Chlamydia abortus (strain DSM 27085 / S26/3) (Chlamydophila abortus).